The primary structure comprises 121 residues: Natriuretic peptides B (121 aa).

Residues 1–26 form the signal peptide; the sequence is MDLQKVLPQMILLLLFLNLSPLGGHS. A disulfide bridge links Cys-99 with Cys-115.

Belongs to the natriuretic peptide family. The precursor molecule is proteolytically cleaved by the endoprotease Furin to produce brain natriuretic peptide 45. May undergo further proteolytic cleavage by various proteases such as DPP4, MME and possibly FAP, to give rise to a variety of shorter peptides. May be cleaved at Ser-91 by the prolyl endopeptidase FAP (seprase) activity (in vitro). May be degraded by IDE. During IDE degradation, the resulting products initially increase the activation of NPR1 and can also stimulate NPR2 to produce cGMP before the fragments are completely degraded and inactivated by IDE (in vitro). As to expression, expressed in the atria and ventricles, but at much lower levels than NPPA. Expression levels in the ventricles are slightly higher than in the atria. Very low levels of expression detected in the brain, hypothalamus, lung and aorta. Atria (at protein level). Cardiocytes (at protein level).

Its subcellular location is the secreted. In terms of biological role, cardiac hormone that plays a key role in mediating cardio-renal homeostasis. May also function as a paracrine antifibrotic factor in the heart. Acts by specifically binding and stimulating NPR1 to produce cGMP, which in turn activates effector proteins that drive various biological responses. Likely involved in regulating the extracellular fluid volume and maintaining the fluid-electrolyte balance through natriuresis, diuresis, kaluresis and chloruresis. This Rattus norvegicus (Rat) protein is Natriuretic peptides B (Nppb).